Consider the following 100-residue polypeptide: Aspartyl/glutamyl-tRNA(Asn/Gln) amidotransferase subunit C (100 aa).

Belongs to the GatC family. Heterotrimer of A, B and C subunits.

It catalyses the reaction L-glutamyl-tRNA(Gln) + L-glutamine + ATP + H2O = L-glutaminyl-tRNA(Gln) + L-glutamate + ADP + phosphate + H(+). The catalysed reaction is L-aspartyl-tRNA(Asn) + L-glutamine + ATP + H2O = L-asparaginyl-tRNA(Asn) + L-glutamate + ADP + phosphate + 2 H(+). Its function is as follows. Allows the formation of correctly charged Asn-tRNA(Asn) or Gln-tRNA(Gln) through the transamidation of misacylated Asp-tRNA(Asn) or Glu-tRNA(Gln) in organisms which lack either or both of asparaginyl-tRNA or glutaminyl-tRNA synthetases. The reaction takes place in the presence of glutamine and ATP through an activated phospho-Asp-tRNA(Asn) or phospho-Glu-tRNA(Gln). This is Aspartyl/glutamyl-tRNA(Asn/Gln) amidotransferase subunit C from Staphylococcus haemolyticus (strain JCSC1435).